We begin with the raw amino-acid sequence, 109 residues long: Nucleoid-associated protein VP2178 (109 aa).

Disordered stretches follow at residues methionine 1–glutamine 22 and glutamine 88–phenylalanine 109.

This sequence belongs to the YbaB/EbfC family. As to quaternary structure, homodimer.

Its subcellular location is the cytoplasm. It localises to the nucleoid. Its function is as follows. Binds to DNA and alters its conformation. May be involved in regulation of gene expression, nucleoid organization and DNA protection. The polypeptide is Nucleoid-associated protein VP2178 (Vibrio parahaemolyticus serotype O3:K6 (strain RIMD 2210633)).